The chain runs to 453 residues: Choline kinase alpha (453 aa).

The interval 22-81 (CGGSAAPTPGVGQQRDAAGELESKQLGGRSQPLALPPPPPPPLPLPPPPSPPLADEQPEP) is disordered. A compositionally biased stretch (pro residues) spans 55 to 73 (ALPPPPPPPLPLPPPPSPP). Residue serine 71 is modified to Phosphoserine. Residues 113–119 (RGGLSNM), arginine 142, and 203–209 (QFIPSRR) contribute to the ATP site. 115–117 (GLS) contributes to the phosphocholine binding site. Lysine 243 is subject to N6-acetyllysine. Position 275 is a phosphoserine (serine 275). The ATP site is built by glutamine 304 and aspartate 326.

This sequence belongs to the choline/ethanolamine kinase family. Heterodimer with CHKB. Homodimer. In terms of assembly, monomer; acetylation by KAT5 promotes dissociation of the homodimer and monomerization. In terms of processing, phosphorylated at Ser-275 by AMPK in response to glucose deprivation, leading to localization to lipid droplets. Acetylated by KAT5 at Lys-243 following phosphorylation by AMPK, leading to monomerization and conversion into a tyrosine-protein kinase. In terms of tissue distribution, testis, brain, lung, kidney and liver.

Its subcellular location is the cytoplasm. The protein localises to the cytosol. It is found in the lipid droplet. It catalyses the reaction choline + ATP = phosphocholine + ADP + H(+). The catalysed reaction is ethanolamine + ATP = phosphoethanolamine + ADP + H(+). The enzyme catalyses L-tyrosyl-[protein] + ATP = O-phospho-L-tyrosyl-[protein] + ADP + H(+). The protein operates within phospholipid metabolism; phosphatidylcholine biosynthesis; phosphocholine from choline: step 1/1. Its pathway is phospholipid metabolism; phosphatidylethanolamine biosynthesis; phosphatidylethanolamine from ethanolamine: step 1/3. In terms of biological role, plays a key role in phospholipid biosynthesis by catalyzing the phosphorylation of free choline to phosphocholine, the first step in phosphatidylcholine biosynthesis. Also phosphorylates ethanolamine, thereby contributing to phosphatidylethanolamine biosynthesis. Has higher activity with choline. This isoform plays a key role in lipolysis of lipid droplets following glucose deprivation. In response to glucose deprivation, phosphorylated by AMPK, promoting localization to lipid droplets. Phosphorylation is followed by acetylation by KAT5, leading to dissociation of the homodimer into a monomer. Monomeric CHKA isoform 1 is converted into a tyrosine-protein kinase, which phosphorylates lipid droplet structural proteins PLIN2 and PLIN3, leading to lipolysis of lipid droplets. The protein is Choline kinase alpha (Chka) of Rattus norvegicus (Rat).